The following is a 414-amino-acid chain: uncharacterized protein (414 aa).

Residues 204–230 (LVGTPAPGPNGSNSDGDSERASQDVRD) are disordered. Residues 220–230 (DSERASQDVRD) show a composition bias toward basic and acidic residues.

Belongs to the CdaR family.

This is an uncharacterized protein from Mycobacterium tuberculosis (strain CDC 1551 / Oshkosh).